The primary structure comprises 539 residues: Phenylalanine--tRNA ligase beta subunit (539 aa).

The B5 domain occupies 271-347; sequence LSPARWTVTT…KSYGYENLKA (77 aa). Residues Asp-325, Asp-331, Glu-334, and Asp-335 each contribute to the Mg(2+) site.

Belongs to the phenylalanyl-tRNA synthetase beta subunit family. Type 2 subfamily. As to quaternary structure, tetramer of two alpha and two beta subunits. Mg(2+) is required as a cofactor.

The protein resides in the cytoplasm. The catalysed reaction is tRNA(Phe) + L-phenylalanine + ATP = L-phenylalanyl-tRNA(Phe) + AMP + diphosphate + H(+). This Methanothrix thermoacetophila (strain DSM 6194 / JCM 14653 / NBRC 101360 / PT) (Methanosaeta thermophila) protein is Phenylalanine--tRNA ligase beta subunit.